Here is a 445-residue protein sequence, read N- to C-terminus: MCVEMKNKTNTTIPSQPQIPIQPSILPTQQTISPIPQIIPPTQPTLPKLQLDPILGSNGIPIANQEWSGTEYVRTNDPTKFIVITKTLDPKIARFLPTFKKPVITDIINKTSNSTLDMNKIITTNNFNVENAKALANFGNSCYFGTSMQLLFVMFHVRNFIVKNSNFTETGISIDLKNAYDSIKNLFITMNTAPKNDPIKSFPDYPNVKKQIMKEPDPVQMLEEDAEEFITQFMSDLDPKARNLALIKGNEYIYDVSNAQLNRQQSFSNIFNLIPLDIIKSNPTDTLENILSKTYTMVELREGVNTIQNPITSDYEFTYFVNQPTILPEYFLVRLNMVDPTSTNKLRHNIQINTTLVLTINGQTTTYFALAIIVHRGNSIRTGHYTCLVFDNQTGSQFQYIFYDDSLSSLVSIPTNSKIIPSNLYLKNITDSAYIILYGDITKLR.

Residues 133–441 enclose the USP domain; that stretch reads KALANFGNSC…SAYIILYGDI (309 aa). The Nucleophile role is filled by C142. H384 (proton acceptor) is an active-site residue.

It belongs to the peptidase C19 family.

The protein resides in the virion. The catalysed reaction is Thiol-dependent hydrolysis of ester, thioester, amide, peptide and isopeptide bonds formed by the C-terminal Gly of ubiquitin (a 76-residue protein attached to proteins as an intracellular targeting signal).. This is Putative ubiquitin carboxyl-terminal hydrolase L293 from Acanthamoeba polyphaga mimivirus (APMV).